The chain runs to 545 residues: CTP synthase (545 aa).

Residues 1 to 266 (MATNYIFVTG…DDFVCERFRL (266 aa)) are amidoligase domain. S14 is a binding site for CTP. Position 14 (S14) interacts with UTP. Residues 15–20 (SLGKGI) and D72 each bind ATP. The Mg(2+) site is built by D72 and E140. Residues 147-149 (DIE), 187-192 (KTKPTQ), and K223 contribute to the CTP site. Residues 187–192 (KTKPTQ) and K223 each bind UTP. 239–241 (KDV) provides a ligand contact to ATP. One can recognise a Glutamine amidotransferase type-1 domain in the interval 291-542 (TIGMVGKYTE…VKAAYENHKK (252 aa)). Residue G352 coordinates L-glutamine. The active-site Nucleophile; for glutamine hydrolysis is C379. L-glutamine contacts are provided by residues 380-383 (LGMQ), E403, and R470. Catalysis depends on residues H515 and E517.

This sequence belongs to the CTP synthase family. Homotetramer.

The catalysed reaction is UTP + L-glutamine + ATP + H2O = CTP + L-glutamate + ADP + phosphate + 2 H(+). It catalyses the reaction L-glutamine + H2O = L-glutamate + NH4(+). The enzyme catalyses UTP + NH4(+) + ATP = CTP + ADP + phosphate + 2 H(+). It participates in pyrimidine metabolism; CTP biosynthesis via de novo pathway; CTP from UDP: step 2/2. Its activity is regulated as follows. Allosterically activated by GTP, when glutamine is the substrate; GTP has no effect on the reaction when ammonia is the substrate. The allosteric effector GTP functions by stabilizing the protein conformation that binds the tetrahedral intermediate(s) formed during glutamine hydrolysis. Inhibited by the product CTP, via allosteric rather than competitive inhibition. Catalyzes the ATP-dependent amination of UTP to CTP with either L-glutamine or ammonia as the source of nitrogen. Regulates intracellular CTP levels through interactions with the four ribonucleotide triphosphates. The sequence is that of CTP synthase from Haemophilus influenzae (strain ATCC 51907 / DSM 11121 / KW20 / Rd).